A 1182-amino-acid chain; its full sequence is uncharacterized protein (1182 aa).

The helical transmembrane segment at 618–638 (GSSSLVCSVMVVIFSIILYYL) threads the bilayer.

The protein localises to the host membrane. This is an uncharacterized protein from Callospermophilus lateralis (Golden-mantled ground squirrel).